Here is a 503-residue protein sequence, read N- to C-terminus: Probable cytosol aminopeptidase (503 aa).

The Mn(2+) site is built by K268 and D273. Residue K280 is part of the active site. Mn(2+) contacts are provided by D291, D350, and E352. R354 is an active-site residue.

Belongs to the peptidase M17 family. Mn(2+) serves as cofactor.

The protein resides in the cytoplasm. It catalyses the reaction Release of an N-terminal amino acid, Xaa-|-Yaa-, in which Xaa is preferably Leu, but may be other amino acids including Pro although not Arg or Lys, and Yaa may be Pro. Amino acid amides and methyl esters are also readily hydrolyzed, but rates on arylamides are exceedingly low.. The catalysed reaction is Release of an N-terminal amino acid, preferentially leucine, but not glutamic or aspartic acids.. Presumably involved in the processing and regular turnover of intracellular proteins. Catalyzes the removal of unsubstituted N-terminal amino acids from various peptides. The sequence is that of Probable cytosol aminopeptidase from Methylobacterium radiotolerans (strain ATCC 27329 / DSM 1819 / JCM 2831 / NBRC 15690 / NCIMB 10815 / 0-1).